Consider the following 105-residue polypeptide: Nucleoid-associated protein PTH_0052 (105 aa).

This sequence belongs to the YbaB/EbfC family. As to quaternary structure, homodimer.

Its subcellular location is the cytoplasm. The protein resides in the nucleoid. Binds to DNA and alters its conformation. May be involved in regulation of gene expression, nucleoid organization and DNA protection. This Pelotomaculum thermopropionicum (strain DSM 13744 / JCM 10971 / SI) protein is Nucleoid-associated protein PTH_0052.